Here is a 148-residue protein sequence, read N- to C-terminus: Protein RESISTANCE TO POWDERY MILDEW 8.1 (148 aa).

One can recognise an RPW8 domain in the interval 1–148; it reads MPIGELAIGA…VISACSKIRA (148 aa). A helical transmembrane segment spans residues 7-23; it reads AIGAVLGVGAQAIYDRF. Positions 120 to 140 form a coiled coil; it reads DDIKEIKAKISEMDTKLAEVI.

Belongs to the plant RPW8 protein family.

The protein localises to the membrane. Its function is as follows. Disease resistance (R) protein that induces localized, salicylic acid-dependent defenses. Confers resistance to powdery mildew (e.g. Erysiphe cichoracearum UCSC1). The protein is Protein RESISTANCE TO POWDERY MILDEW 8.1 of Arabidopsis thaliana (Mouse-ear cress).